The chain runs to 656 residues: Macrolide export ATP-binding/permease protein MacB (656 aa).

The 239-residue stretch at 6 to 244 (LEVSACYRSF…AAPKTEVIPA (239 aa)) folds into the ABC transporter domain. 42-49 (GASGSGKS) lines the ATP pocket. 4 helical membrane passes run 277–297 (FLTM…VALG), 531–551 (LLIS…VMNI), 586–606 (LVCL…GVVF), and 621–641 (SIVA…FLPA).

The protein belongs to the ABC transporter superfamily. Macrolide exporter (TC 3.A.1.122) family. As to quaternary structure, homodimer. Part of the tripartite efflux system MacAB-TolC, which is composed of an inner membrane transporter, MacB, a periplasmic membrane fusion protein, MacA, and an outer membrane component, TolC. The complex forms a large protein conduit and can translocate molecules across both the inner and outer membranes. Interacts with MacA.

The protein localises to the cell inner membrane. Functionally, part of the tripartite efflux system MacAB-TolC. MacB is a non-canonical ABC transporter that contains transmembrane domains (TMD), which form a pore in the inner membrane, and an ATP-binding domain (NBD), which is responsible for energy generation. Confers resistance against macrolides. This Shewanella sp. (strain ANA-3) protein is Macrolide export ATP-binding/permease protein MacB.